Reading from the N-terminus, the 766-residue chain is Probable serine/threonine-protein kinase KKQ8 (766 aa).

5 disordered regions span residues 1–165 (MPEH…DTSS), 201–240 (GHYA…AAQL), 277–297 (SDAN…LDLP), 362–384 (TRSH…DDPS), and 417–437 (AAKN…AGVQ). Positions 14-25 (RSLSLGSSMRSL) are enriched in low complexity. Over residues 49-64 (VDIRVDTASASREHTP) the composition is skewed to basic and acidic residues. Residues 94-120 (LTPTNSNPQSKSGSPVSQNTSQESLIT) are compositionally biased toward polar residues. A compositionally biased stretch (basic and acidic residues) spans 127-137 (EDYRPSKDSRR). 2 stretches are compositionally biased toward polar residues: residues 140-165 (RNAS…DTSS) and 214-223 (PTSSRVPSRS). Basic and acidic residues predominate over residues 288–297 (SKNDGHLDLP). Positions 372-382 (DSSDDDEELDD) are enriched in acidic residues. A compositionally biased stretch (basic residues) spans 419–430 (KNKHNQSSKHRT). Residues 449–752 (GKCVAVVGHG…IDKLLQTGWM (304 aa)) form the Protein kinase domain. ATP-binding positions include 455-463 (VGHGAYGVV) and Lys-493. The Proton acceptor role is filled by Asp-603.

This sequence belongs to the protein kinase superfamily. CAMK Ser/Thr protein kinase family. NPR/HAL subfamily. HAL5 sub-subfamily.

The protein resides in the cytoplasm. It catalyses the reaction L-seryl-[protein] + ATP = O-phospho-L-seryl-[protein] + ADP + H(+). It carries out the reaction L-threonyl-[protein] + ATP = O-phospho-L-threonyl-[protein] + ADP + H(+). The protein is Probable serine/threonine-protein kinase KKQ8 (KKQ8) of Candida glabrata (strain ATCC 2001 / BCRC 20586 / JCM 3761 / NBRC 0622 / NRRL Y-65 / CBS 138) (Yeast).